The following is a 262-amino-acid chain: Acyl-[acyl-carrier-protein]--UDP-N-acetylglucosamine O-acyltransferase (262 aa).

This sequence belongs to the transferase hexapeptide repeat family. LpxA subfamily. As to quaternary structure, homotrimer.

The protein resides in the cytoplasm. It carries out the reaction a (3R)-hydroxyacyl-[ACP] + UDP-N-acetyl-alpha-D-glucosamine = a UDP-3-O-[(3R)-3-hydroxyacyl]-N-acetyl-alpha-D-glucosamine + holo-[ACP]. The protein operates within glycolipid biosynthesis; lipid IV(A) biosynthesis; lipid IV(A) from (3R)-3-hydroxytetradecanoyl-[acyl-carrier-protein] and UDP-N-acetyl-alpha-D-glucosamine: step 1/6. Functionally, involved in the biosynthesis of lipid A, a phosphorylated glycolipid that anchors the lipopolysaccharide to the outer membrane of the cell. This Mannheimia succiniciproducens (strain KCTC 0769BP / MBEL55E) protein is Acyl-[acyl-carrier-protein]--UDP-N-acetylglucosamine O-acyltransferase.